Here is a 609-residue protein sequence, read N- to C-terminus: Proteasome-associated ATPase (609 aa).

A disordered region spans residues 1–24 (MGESERSEAFGIPRDSPLSSGDAA). Residues 20 to 96 (SGDAAELEQL…LREEVDRLGQ (77 aa)) are a coiled coil. 296–301 (GCGKTL) contributes to the ATP binding site. A docks into pockets in the proteasome alpha-ring region spans residues 608–609 (YL).

The protein belongs to the AAA ATPase family. As to quaternary structure, homohexamer. Assembles into a hexameric ring structure that caps the 20S proteasome core. Strongly interacts with the prokaryotic ubiquitin-like protein Pup through a hydrophobic interface; the interacting region of ARC lies in its N-terminal coiled-coil domain. There is one Pup binding site per ARC hexamer ring. Upon ATP-binding, the C-terminus of ARC interacts with the alpha-rings of the proteasome core, possibly by binding to the intersubunit pockets.

It participates in protein degradation; proteasomal Pup-dependent pathway. ATPase which is responsible for recognizing, binding, unfolding and translocation of pupylated proteins into the bacterial 20S proteasome core particle. May be essential for opening the gate of the 20S proteasome via an interaction with its C-terminus, thereby allowing substrate entry and access to the site of proteolysis. Thus, the C-termini of the proteasomal ATPase may function like a 'key in a lock' to induce gate opening and therefore regulate proteolysis. The sequence is that of Proteasome-associated ATPase from Mycobacterium bovis (strain BCG / Pasteur 1173P2).